Reading from the N-terminus, the 159-residue chain is 6,7-dimethyl-8-ribityllumazine synthase (159 aa).

Residues Phe-22, 57–59 (AVE), and 81–83 (AVI) each bind 5-amino-6-(D-ribitylamino)uracil. 86–87 (GT) contributes to the (2S)-2-hydroxy-3-oxobutyl phosphate binding site. Residue His-89 is the Proton donor of the active site. Residue Phe-114 coordinates 5-amino-6-(D-ribitylamino)uracil. Arg-128 contacts (2S)-2-hydroxy-3-oxobutyl phosphate.

It belongs to the DMRL synthase family. Forms an icosahedral capsid composed of 60 subunits, arranged as a dodecamer of pentamers.

It catalyses the reaction (2S)-2-hydroxy-3-oxobutyl phosphate + 5-amino-6-(D-ribitylamino)uracil = 6,7-dimethyl-8-(1-D-ribityl)lumazine + phosphate + 2 H2O + H(+). The protein operates within cofactor biosynthesis; riboflavin biosynthesis; riboflavin from 2-hydroxy-3-oxobutyl phosphate and 5-amino-6-(D-ribitylamino)uracil: step 1/2. Catalyzes the formation of 6,7-dimethyl-8-ribityllumazine by condensation of 5-amino-6-(D-ribitylamino)uracil with 3,4-dihydroxy-2-butanone 4-phosphate. This is the penultimate step in the biosynthesis of riboflavin. The chain is 6,7-dimethyl-8-ribityllumazine synthase from Shewanella baltica (strain OS155 / ATCC BAA-1091).